Here is a 213-residue protein sequence, read N- to C-terminus: Glutathione S-transferase (213 aa).

In terms of domain architecture, GST N-terminal spans 4–81; that stretch reads AKPILYGAWI…YLEDKYPQHP (78 aa). Residues 86–211 enclose the GST C-terminal domain; the sequence is DIKTKGLDLQ…LPQNQPDAPS (126 aa).

This sequence belongs to the GST superfamily. Zeta family.

Its subcellular location is the cytoplasm. The catalysed reaction is RX + glutathione = an S-substituted glutathione + a halide anion + H(+). Functionally, has a glutathione transferase activity with ethacrynic acid and nitrophenyl acetate. Has low glutathione peroxidase activity with cumene hydroperoxide. The polypeptide is Glutathione S-transferase (GSTZ1) (Triticum aestivum (Wheat)).